The following is a 275-amino-acid chain: Probable ribosomal RNA small subunit methyltransferase A (275 aa).

S-adenosyl-L-methionine contacts are provided by leucine 13, glycine 38, glutamate 59, aspartate 84, and asparagine 101.

The protein belongs to the class I-like SAM-binding methyltransferase superfamily. rRNA adenine N(6)-methyltransferase family. RsmA subfamily.

It is found in the cytoplasm. Functionally, specifically dimethylates two adjacent adenosines in the loop of a conserved hairpin near the 3'-end of 16S rRNA in the 30S particle. May play a critical role in biogenesis of 30S subunits. This is Probable ribosomal RNA small subunit methyltransferase A from Methanocaldococcus jannaschii (strain ATCC 43067 / DSM 2661 / JAL-1 / JCM 10045 / NBRC 100440) (Methanococcus jannaschii).